The sequence spans 215 residues: Glutathione S-transferase stcT (215 aa).

Residues 2-82 enclose the GST N-terminal domain; that stretch reads PFGTLYTRPF…YDSNTTLLGT (81 aa). Glutathione is bound by residues lysine 52 and glutamate 66. Lysine 52 is a substrate binding site. Residues 83-211 form the GST C-terminal domain; that stretch reads TGQEYASIIR…PVLAEYEMPI (129 aa).

Belongs to the GST superfamily. Glutathione serves as cofactor.

It functions in the pathway mycotoxin biosynthesis; sterigmatocystin biosynthesis. In terms of biological role, glutathione S-transferase; part of the gene cluster that mediates the biosynthesis of sterigmatocystin (ST), a polyketide-derived furanocoumarin which is part of the most toxic and carcinogenic compounds among the known mycotoxins. The first step in the biosynthesis of sterigmatocystin is the production of hexanoate by the fatty acid synthase (FAS) units stcJ and stcK. The polyketide backbone is assembled by the non-reducing polyketide synthase stcA by condensation of the starter hexanoyl-CoA and 7 malonyl-CoA extender units followed by cyclization and release of norsolorinic acid. Norsolorinic acid is the first stable intermediate in the biosynthesis of sterigmatocystin and is converted into averantin (AVN) by the ketoreductase stcE which reduces the hexanoate ketone to an alcohol. Averantin is then oxidized into 5'-hydroxyaverantin (HAVN) by the cytochrome P450 monooxygenase stcF. 5'-hydroxyaverantin is further converted to 5'-oxyaverantin (OAVN) by the 5'-hydroxyaverantin dehydrogenase stcG. The next step is the conversion of OAVN into averufin (AVF) which is catalyzed by a yet to be identified enzyme. The cytochrome P450 monooxygenase stcB and the flavin-binding monooxygenase stcW are both required for the conversion of averufin to 1-hydroxyversicolorone. The esterase stcI probably catalyzes the formation of versiconal hemiacetal acetate from 1-hydroxyversicolorone. The oxydoreductase stcN then probably catalyzes the biosynthetic step from versiconal to versicolorin B (VERB). The next step is performed by the versicolorin B desaturase stcL to produce versicolorin A (VERA). The ketoreductase stcU and the cytochrome P450 monooxygenase stcS are involved in the conversion of versicolorin A to demethylsterigmatocystin. The Baeyer-Villiger oxidas stcQ and the reductase stcR might be involved in the biosynthetic step from versicolorin A to demethylsterigmatocystin. The final step in the biosynthesis of sterigmatocystin is the methylation of demethylsterigmatocystin catalyzed by the methyltransferase stcP. The chain is Glutathione S-transferase stcT from Emericella nidulans (strain FGSC A4 / ATCC 38163 / CBS 112.46 / NRRL 194 / M139) (Aspergillus nidulans).